The chain runs to 380 residues: Cytochrome b (380 aa).

Transmembrane regions (helical) follow at residues 34–54 (FGSLLGLCLMTQILTGLLLAM), 78–99 (WLIRNLHANGASFFFICIYLHI), 114–134 (WNTGVILLLTLMATAFVGYVL), and 179–199 (FFALHFLLPFMIAGLTLIHLT). His-84 and His-98 together coordinate heme b. Positions 183 and 197 each coordinate heme b. His-202 is an a ubiquinone binding site. The next 4 helical transmembrane spans lie at 227–247 (TKDLLGFLLMIAPLLTLAMFS), 289–309 (LGGVLALAASVLILFLAPFLH), 321–341 (LSQLLFWILVANLLILTWVGS), and 348–368 (FIIIGQIASLTYFTILLILFP).

The protein belongs to the cytochrome b family. The cytochrome bc1 complex contains 11 subunits: 3 respiratory subunits (MT-CYB, CYC1 and UQCRFS1), 2 core proteins (UQCRC1 and UQCRC2) and 6 low-molecular weight proteins (UQCRH/QCR6, UQCRB/QCR7, UQCRQ/QCR8, UQCR10/QCR9, UQCR11/QCR10 and a cleavage product of UQCRFS1). This cytochrome bc1 complex then forms a dimer. It depends on heme b as a cofactor.

It localises to the mitochondrion inner membrane. Component of the ubiquinol-cytochrome c reductase complex (complex III or cytochrome b-c1 complex) that is part of the mitochondrial respiratory chain. The b-c1 complex mediates electron transfer from ubiquinol to cytochrome c. Contributes to the generation of a proton gradient across the mitochondrial membrane that is then used for ATP synthesis. In Amazilia tzacatl (Rufous-tailed hummingbird), this protein is Cytochrome b (MT-CYB).